The sequence spans 514 residues: Peptide chain release factor 3 (514 aa).

One can recognise a tr-type G domain in the interval 8 to 268; it reads KKRRTFAIIS…TFLEFAPEPH (261 aa). Residues 17–24, 85–89, and 139–142 each bind GTP; these read SHPDAGKT, DTPGH, and NKLD.

It belongs to the TRAFAC class translation factor GTPase superfamily. Classic translation factor GTPase family. PrfC subfamily.

Its subcellular location is the cytoplasm. Functionally, increases the formation of ribosomal termination complexes and stimulates activities of RF-1 and RF-2. It binds guanine nucleotides and has strong preference for UGA stop codons. It may interact directly with the ribosome. The stimulation of RF-1 and RF-2 is significantly reduced by GTP and GDP, but not by GMP. This is Peptide chain release factor 3 from Streptococcus uberis (strain ATCC BAA-854 / 0140J).